The following is a 430-amino-acid chain: Acetyl-CoA acetyltransferase FG05087, mitochondrial (430 aa).

Residues 1-32 constitute a mitochondrion transit peptide; sequence MTVTQLRSAGRLAQLAGHVNGARQFSTRPALR. Cys122 acts as the Acyl-thioester intermediate in catalysis. Tyr217 contributes to the K(+) binding site. Lys260 is a binding site for CoA. Ala278 is a K(+) binding site. Residue Ser282 coordinates CoA. Active-site proton acceptor residues include His385 and Cys413. Asn414 lines the chloride pocket.

This sequence belongs to the thiolase-like superfamily. Thiolase family. Homotetramer. K(+) is required as a cofactor.

It is found in the mitochondrion. It carries out the reaction 2 acetyl-CoA = acetoacetyl-CoA + CoA. Its function is as follows. Mitochondrial acetyl-CoA acetyltransferase that catalyzes both the formation and degradation of acetoacetyl-CoA. Seems not to be involved in ergosterol biosynthesis. Plays an important role in growth, morphogenesis and maintaining mitochondrial function including the response to oxidative stresses. The polypeptide is Acetyl-CoA acetyltransferase FG05087, mitochondrial (Gibberella zeae (strain ATCC MYA-4620 / CBS 123657 / FGSC 9075 / NRRL 31084 / PH-1) (Wheat head blight fungus)).